A 241-amino-acid polypeptide reads, in one-letter code: Small ribosomal subunit protein uS3 (241 aa).

The KH type-2 domain occupies 39-107 (IRTYLKKELY…PLSVNIKEEK (69 aa)). The tract at residues 214–241 (AEVKEEQQKEGARRPKRAPKRENSGKAE) is disordered. Over residues 215-226 (EVKEEQQKEGAR) the composition is skewed to basic and acidic residues.

This sequence belongs to the universal ribosomal protein uS3 family. As to quaternary structure, part of the 30S ribosomal subunit. Forms a tight complex with proteins S10 and S14.

Binds the lower part of the 30S subunit head. Binds mRNA in the 70S ribosome, positioning it for translation. This chain is Small ribosomal subunit protein uS3, found in Sulfurimonas denitrificans (strain ATCC 33889 / DSM 1251) (Thiomicrospira denitrificans (strain ATCC 33889 / DSM 1251)).